The sequence spans 300 residues: Protein CANDIDATE G-PROTEIN COUPLED RECEPTOR 2 (300 aa).

The next 7 membrane-spanning stretches (helical) occupy residues 37–57 (GFLH…YLAY), 73–93 (IMIA…AWCC), 110–130 (LTLF…AFLF), 152–172 (IGLD…PLFI), 183–203 (WGLW…IFFM), 222–242 (ITVM…TANG), and 245–265 (FGLW…LPLL).

This sequence belongs to the UPF0359 family. As to quaternary structure, interacts with GPA1. In terms of tissue distribution, expressed at low levels in seedlings.

Its subcellular location is the cell membrane. In terms of biological role, plays a role in plants and microbes interactions. G-protein coupled melatonin receptor involved in root growth mediated by the bacterial quorum-sensing signals N-acyl-homoserine lactones (AHLs). Binds to melatonin. Phytomelatonin receptor required, in collaboration with GPA1, for melatonin-mediated stomatal closure involving H(2)O(2) and Ca(2+) signals. Essential for melatonin-mediated plant response to osmotic stress probably by activating reactive oxygen species (ROS) scavenging ability. This is Protein CANDIDATE G-PROTEIN COUPLED RECEPTOR 2 from Arabidopsis thaliana (Mouse-ear cress).